The primary structure comprises 422 residues: Probable metallocarboxypeptidase A (422 aa).

Positions 1–17 are cleaved as a signal peptide; sequence MRSVLSLALLAVNVVTA. A propeptide spans 18–112 (activation peptide); sequence AVVAPFDYSG…FEAYSAGYAP (95 aa). Positions 119–419 constitute a Peptidase M14 domain; that stretch reads SYHSYQDHLS…AGTVAMLKAV (301 aa). 2 residues coordinate Zn(2+): His179 and Glu182. Residues 179–182, Arg237, and 254–255 each bind substrate; these read HARE and NR. An intrachain disulfide couples Cys248 to Cys271. Residue His309 participates in Zn(2+) binding. Residue 310–311 coordinates substrate; it reads SY. Residue Glu385 is the Proton donor/acceptor of the active site.

It belongs to the peptidase M14 family. It depends on Zn(2+) as a cofactor.

The protein resides in the secreted. Its function is as follows. Extracellular metalloprotease that contributes to pathogenicity. The polypeptide is Probable metallocarboxypeptidase A (MCPA) (Trichophyton verrucosum (strain HKI 0517)).